The chain runs to 776 residues: Probable inorganic carbon transporter subunit DabA (776 aa).

Residues C313, D315, H473, and C488 each coordinate Zn(2+).

It belongs to the inorganic carbon transporter (TC 9.A.2) DabA family. Forms a complex with DabB. It depends on Zn(2+) as a cofactor.

It is found in the cell inner membrane. Functionally, part of an energy-coupled inorganic carbon pump. This Chromobacterium violaceum (strain ATCC 12472 / DSM 30191 / JCM 1249 / CCUG 213 / NBRC 12614 / NCIMB 9131 / NCTC 9757 / MK) protein is Probable inorganic carbon transporter subunit DabA.